The primary structure comprises 288 residues: Acetyl-coenzyme A carboxylase carboxyl transferase subunit beta (288 aa).

A CoA carboxyltransferase N-terminal domain is found at 32 to 288; that stretch reads MWAKCPSCKR…LRLHSLEGWR (257 aa). Cys-36, Cys-39, Cys-54, and Cys-57 together coordinate Zn(2+). The C4-type zinc finger occupies 36 to 57; sequence CPSCKRTLYTKEMGAEKICPHC.

Belongs to the AccD/PCCB family. In terms of assembly, acetyl-CoA carboxylase is a heterohexamer composed of biotin carboxyl carrier protein (AccB), biotin carboxylase (AccC) and two subunits each of ACCase subunit alpha (AccA) and ACCase subunit beta (AccD). It depends on Zn(2+) as a cofactor.

The protein localises to the cytoplasm. It catalyses the reaction N(6)-carboxybiotinyl-L-lysyl-[protein] + acetyl-CoA = N(6)-biotinyl-L-lysyl-[protein] + malonyl-CoA. Its pathway is lipid metabolism; malonyl-CoA biosynthesis; malonyl-CoA from acetyl-CoA: step 1/1. Its function is as follows. Component of the acetyl coenzyme A carboxylase (ACC) complex. Biotin carboxylase (BC) catalyzes the carboxylation of biotin on its carrier protein (BCCP) and then the CO(2) group is transferred by the transcarboxylase to acetyl-CoA to form malonyl-CoA. The sequence is that of Acetyl-coenzyme A carboxylase carboxyl transferase subunit beta from Enterococcus faecalis (strain ATCC 700802 / V583).